A 173-amino-acid chain; its full sequence is FMN reductase (NADH) RutF 2 (173 aa).

Belongs to the non-flavoprotein flavin reductase family. RutF subfamily.

It carries out the reaction FMNH2 + NAD(+) = FMN + NADH + 2 H(+). Catalyzes the reduction of FMN to FMNH2 which is used to reduce pyrimidine by RutA via the Rut pathway. The protein is FMN reductase (NADH) RutF 2 of Rhizobium rhizogenes (strain K84 / ATCC BAA-868) (Agrobacterium radiobacter).